A 141-amino-acid chain; its full sequence is VLSATDKANVKTFWGKLGGHGGEYGGEALDRMFQAHPTTKTYFPHFDLNPGSAQVKGHGKKVADALTTAVNNLDDVPGALSALSDLHAHKLRVDPVNFKLLSHCLLVTLALHHPADFTPAVHASLDKFLATVATVLTSKYR.

Positions 1–141 (VLSATDKANV…VATVLTSKYR (141 aa)) constitute a Globin domain. A Phosphoserine modification is found at S3. An N6-succinyllysine mark is found at K7 and K11. K16 carries the N6-acetyllysine; alternate modification. K16 bears the N6-succinyllysine; alternate mark. Y24 carries the post-translational modification Phosphotyrosine. Residue K40 is modified to N6-succinyllysine. H58 serves as a coordination point for O2. H87 is a binding site for heme b. S102 carries the post-translational modification Phosphoserine. T108 is subject to Phosphothreonine. The residue at position 124 (S124) is a Phosphoserine. A phosphothreonine mark is found at T134 and T137. S138 bears the Phosphoserine mark.

Belongs to the globin family. As to quaternary structure, heterotetramer of two alpha chains and two beta chains. As to expression, red blood cells.

Its function is as follows. Involved in oxygen transport from the lung to the various peripheral tissues. Hemopressin acts as an antagonist peptide of the cannabinoid receptor CNR1. Hemopressin-binding efficiently blocks cannabinoid receptor CNR1 and subsequent signaling. In Erinaceus europaeus (Western European hedgehog), this protein is Hemoglobin subunit alpha (HBA).